The sequence spans 142 residues: Ninjurin-2 (142 aa).

A disordered region spans residues 1-21 (MESARENIDLQPGSSDPRSQP). The Extracellular segment spans residues 1–60 (MESARENIDLQPGSSDPRSQPINLNHYATKKSVAESMLDVALFMSNAMRLKAVLEQGPSS). Over residues 12–21 (PGSSDPRSQP) the composition is skewed to polar residues. Residues 25 to 37 (NHYATKKSVAESM) are helix alpha1. The segment at 38–57 (LDVALFMSNAMRLKAVLEQG) is helix alpha2. Residues 61–92 (HYYTTLVTLISLSLLLQVVIGVLLVVIARLNL) form a helical membrane-spanning segment. At 93–96 (NEVE) the chain is on the cytoplasmic side. Residues 97–126 (KQWRLNQLNNAATILVFFTVVINVFITAFG) form a helical membrane-spanning segment. Residue Gln103 participates in cholesterol binding. Over 127 to 142 (AHKTGFLAARASRNPL) the chain is Extracellular.

The protein belongs to the ninjurin family. As to quaternary structure, homooligomer; in response to stimuli, homooligomerizes into filaments. In contrast to NINJ1, the filament is curved toward the intracellular space, preventing its circularization on a relatively flat membrane to mediate plasma membrane rupture: curvature is caused by cholesterol-binding at the cytoplasmic leaflet. In terms of tissue distribution, widely expressed. In adult, higher expression in the bone marrow and peripheral blood lymphocytes, medium in the lung, lymph node, thyroid, uterus, thymus, spleen, prostate and skeletal muscle, lower in the liver, placenta, brain, heart and kidney. In embryo, higher expression in the thymus, heart and liver, lower in the spleen, lung, brain and kidney.

It is found in the cell membrane. Its function is as follows. Its role in unclear. In contrast to NINJ1 paralog, does not mediate plasma membrane rupture (cytolysis) downstream of necroptotic and pyroptotic programmed cell death. While it is able to oligomerize and form filaments, filaments are curved toward the intracellular space, preventing circularization to mediate plasma membrane rupture. May act as a homophilic transmembrane adhesion molecule involved in nerve regeneration. Promotes axonal growth. This is Ninjurin-2 from Homo sapiens (Human).